A 318-amino-acid polypeptide reads, in one-letter code: L-lactate dehydrogenase (318 aa).

Residues Val18, Asp39, Lys44, Tyr69, and 83–84 (GA) each bind NAD(+). The substrate site is built by Gln86 and Arg92. NAD(+) contacts are provided by residues Ser105, 122 to 124 (VSN), and Ser147. 124–127 (NPVD) contributes to the substrate binding site. 152–155 (DTSR) is a substrate binding site. His179 serves as the catalytic Proton acceptor. Tyr225 carries the phosphotyrosine modification. Thr234 contacts substrate.

This sequence belongs to the LDH/MDH superfamily. LDH family. Homotetramer.

The protein localises to the cytoplasm. It carries out the reaction (S)-lactate + NAD(+) = pyruvate + NADH + H(+). It participates in fermentation; pyruvate fermentation to lactate; (S)-lactate from pyruvate: step 1/1. Its function is as follows. Catalyzes the conversion of lactate to pyruvate. The protein is L-lactate dehydrogenase of Clostridium botulinum (strain Okra / Type B1).